A 180-amino-acid polypeptide reads, in one-letter code: ATP-dependent protease subunit HslV (180 aa).

The active site involves T9. Na(+)-binding residues include A164, C167, and T170.

Belongs to the peptidase T1B family. HslV subfamily. As to quaternary structure, a double ring-shaped homohexamer of HslV is capped on each side by a ring-shaped HslU homohexamer. The assembly of the HslU/HslV complex is dependent on binding of ATP.

It localises to the cytoplasm. It catalyses the reaction ATP-dependent cleavage of peptide bonds with broad specificity.. With respect to regulation, allosterically activated by HslU binding. Its function is as follows. Protease subunit of a proteasome-like degradation complex believed to be a general protein degrading machinery. This chain is ATP-dependent protease subunit HslV, found in Leptospira borgpetersenii serovar Hardjo-bovis (strain JB197).